An 805-amino-acid chain; its full sequence is Arginine/serine-rich protein PNISR (805 aa).

Positions asparagine 75–arginine 88 are enriched in polar residues. Disordered regions lie at residues asparagine 75–glutamate 331 and leucine 382–arginine 805. Pro residues-rich tracts occupy residues proline 100–glycine 115 and tyrosine 183–proline 194. A compositionally biased stretch (basic and acidic residues) spans asparagine 197–arginine 210. 2 positions are modified to phosphoserine: serine 204 and serine 211. Lysine 218 is covalently cross-linked (Glycyl lysine isopeptide (Lys-Gly) (interchain with G-Cter in SUMO2)). A coiled-coil region spans residues arginine 237–glycine 276. Basic and acidic residues predominate over residues glutamate 238–glutamine 258. 4 positions are modified to phosphoserine: serine 290, serine 304, serine 313, and serine 321. The span at serine 290–asparagine 299 shows a compositional bias: acidic residues. A compositionally biased stretch (gly residues) spans glycine 384–serine 393. A compositionally biased stretch (basic and acidic residues) spans glutamine 421 to glutamine 463. Positions tryptophan 427–arginine 461 form a coiled coil. Phosphoserine occurs at positions 465 and 467. Basic and acidic residues-rich tracts occupy residues glutamate 473–proline 486 and glutamate 494–serine 508. Threonine 485 carries the phosphothreonine modification. Lysine 496 participates in a covalent cross-link: Glycyl lysine isopeptide (Lys-Gly) (interchain with G-Cter in SUMO2). The segment covering arginine 509–serine 550 has biased composition (low complexity). Composition is skewed to basic residues over residues serine 551–arginine 560, lysine 567–arginine 579, threonine 587–asparagine 598, and arginine 607–arginine 639. Over residues glutamate 659–phenylalanine 721 the composition is skewed to basic and acidic residues. Residue lysine 703 forms a Glycyl lysine isopeptide (Lys-Gly) (interchain with G-Cter in SUMO2) linkage. Serine 726 is subject to Phosphoserine. Residues isoleucine 732–glycine 753 show a composition bias toward basic and acidic residues. Residues serine 754 to serine 767 are compositionally biased toward low complexity. Basic residues-rich tracts occupy residues lysine 771–serine 781 and arginine 789–arginine 805.

It belongs to the splicing factor SR family. As to quaternary structure, interacts with PNN.

The protein localises to the nucleus speckle. The sequence is that of Arginine/serine-rich protein PNISR (Pnisr) from Mus musculus (Mouse).